A 69-amino-acid polypeptide reads, in one-letter code: UPF0435 protein SH1076 (69 aa).

It belongs to the UPF0435 family.

The polypeptide is UPF0435 protein SH1076 (Staphylococcus haemolyticus (strain JCSC1435)).